Here is a 406-residue protein sequence, read N- to C-terminus: Coenzyme A biosynthesis bifunctional protein CoaBC (406 aa).

Positions 1–191 (MLNNRNVLLC…ETSAPLEGKH (191 aa)) are phosphopantothenoylcysteine decarboxylase. Cys-157 acts as the Proton donor in catalysis. The tract at residues 192-406 (VVITAGPTRE…ALSKQTGERS (215 aa)) is phosphopantothenate--cysteine ligase. Residues Asp-281, Lys-291, Phe-325, Lys-339, and Lys-343 each coordinate CTP.

The protein in the N-terminal section; belongs to the HFCD (homo-oligomeric flavin containing Cys decarboxylase) superfamily. In the C-terminal section; belongs to the PPC synthetase family. Mg(2+) serves as cofactor. Requires FMN as cofactor.

It carries out the reaction N-[(R)-4-phosphopantothenoyl]-L-cysteine + H(+) = (R)-4'-phosphopantetheine + CO2. The catalysed reaction is (R)-4'-phosphopantothenate + L-cysteine + CTP = N-[(R)-4-phosphopantothenoyl]-L-cysteine + CMP + diphosphate + H(+). The protein operates within cofactor biosynthesis; coenzyme A biosynthesis; CoA from (R)-pantothenate: step 2/5. Its pathway is cofactor biosynthesis; coenzyme A biosynthesis; CoA from (R)-pantothenate: step 3/5. Its function is as follows. Catalyzes two sequential steps in the biosynthesis of coenzyme A. In the first step cysteine is conjugated to 4'-phosphopantothenate to form 4-phosphopantothenoylcysteine. In the second step the latter compound is decarboxylated to form 4'-phosphopantotheine. This is Coenzyme A biosynthesis bifunctional protein CoaBC from Bacillus subtilis (strain 168).